A 354-amino-acid polypeptide reads, in one-letter code: Bacteriochlorophyll a protein (354 aa).

Bacteriochlorophyll a is bound by residues His99, His134, His278, His285, and His286.

Homotrimer. Each subunit contains 7 molecules of bacteriochlorophyll a.

Its function is as follows. Intermediary in the transfer of excitation energy from the chlorophyll to the reaction centers. This is Bacteriochlorophyll a protein (fmoA) from Chlorobaculum thiosulfatiphilum (Chlorobium limicola f.sp. thiosulfatophilum).